A 342-amino-acid polypeptide reads, in one-letter code: S-adenosylmethionine:tRNA ribosyltransferase-isomerase (342 aa).

It belongs to the QueA family. As to quaternary structure, monomer.

The protein localises to the cytoplasm. It catalyses the reaction 7-aminomethyl-7-carbaguanosine(34) in tRNA + S-adenosyl-L-methionine = epoxyqueuosine(34) in tRNA + adenine + L-methionine + 2 H(+). The protein operates within tRNA modification; tRNA-queuosine biosynthesis. Transfers and isomerizes the ribose moiety from AdoMet to the 7-aminomethyl group of 7-deazaguanine (preQ1-tRNA) to give epoxyqueuosine (oQ-tRNA). This Sulfurimonas denitrificans (strain ATCC 33889 / DSM 1251) (Thiomicrospira denitrificans (strain ATCC 33889 / DSM 1251)) protein is S-adenosylmethionine:tRNA ribosyltransferase-isomerase.